We begin with the raw amino-acid sequence, 290 residues long: Porphobilinogen deaminase (290 aa).

S-(dipyrrolylmethanemethyl)cysteine is present on C237.

The protein belongs to the HMBS family. In terms of assembly, monomer. The cofactor is dipyrromethane.

It carries out the reaction 4 porphobilinogen + H2O = hydroxymethylbilane + 4 NH4(+). Its pathway is porphyrin-containing compound metabolism; protoporphyrin-IX biosynthesis; coproporphyrinogen-III from 5-aminolevulinate: step 2/4. In terms of biological role, tetrapolymerization of the monopyrrole PBG into the hydroxymethylbilane pre-uroporphyrinogen in several discrete steps. This chain is Porphobilinogen deaminase, found in Clostridium botulinum (strain Langeland / NCTC 10281 / Type F).